The following is a 291-amino-acid chain: NAD kinase (291 aa).

The active-site Proton acceptor is the aspartate 55. NAD(+)-binding positions include 55–56 (DG), arginine 60, 130–131 (NE), aspartate 160, and 171–176 (TAYAFS).

This sequence belongs to the NAD kinase family. A divalent metal cation is required as a cofactor.

Its subcellular location is the cytoplasm. The enzyme catalyses NAD(+) + ATP = ADP + NADP(+) + H(+). Its function is as follows. Involved in the regulation of the intracellular balance of NAD and NADP, and is a key enzyme in the biosynthesis of NADP. Catalyzes specifically the phosphorylation on 2'-hydroxyl of the adenosine moiety of NAD to yield NADP. In Corynebacterium glutamicum (strain ATCC 13032 / DSM 20300 / JCM 1318 / BCRC 11384 / CCUG 27702 / LMG 3730 / NBRC 12168 / NCIMB 10025 / NRRL B-2784 / 534), this protein is NAD kinase.